The following is a 239-amino-acid chain: Probable inner membrane transporter protein TsaS (239 aa).

4 helical membrane-spanning segments follow: residues 65 to 85 (AIGA…WLMG), 128 to 148 (GLVG…IALL), 160 to 180 (ATVP…LFGA), and 186 to 206 (AHTF…VVLG).

The protein belongs to the 4-toluene sulfonate uptake permease (TSUP) (TC 2.A.102) family. Part of a two-component transport system composed of TsaT and TsaS.

It is found in the cell inner membrane. Functionally, involved in the uptake of p-toluenesulphonate (TSA). The chain is Probable inner membrane transporter protein TsaS (tsaS) from Comamonas testosteroni (Pseudomonas testosteroni).